The primary structure comprises 352 residues: 3-isopropylmalate dehydrogenase (352 aa).

76-89 is an NAD(+) binding site; it reads GPKWENLPHEHKPE. 4 residues coordinate substrate: R96, R106, R134, and D219. Mg(2+) contacts are provided by D219, D243, and D247. 276-288 lines the NAD(+) pocket; it reads GSAPDIAGQNKAN.

Belongs to the isocitrate and isopropylmalate dehydrogenases family. LeuB type 1 subfamily. Homodimer. The cofactor is Mg(2+). Mn(2+) is required as a cofactor.

Its subcellular location is the cytoplasm. The enzyme catalyses (2R,3S)-3-isopropylmalate + NAD(+) = 4-methyl-2-oxopentanoate + CO2 + NADH. It participates in amino-acid biosynthesis; L-leucine biosynthesis; L-leucine from 3-methyl-2-oxobutanoate: step 3/4. Its function is as follows. Catalyzes the oxidation of 3-carboxy-2-hydroxy-4-methylpentanoate (3-isopropylmalate) to 3-carboxy-4-methyl-2-oxopentanoate. The product decarboxylates to 4-methyl-2 oxopentanoate. This Chlorobium chlorochromatii (strain CaD3) protein is 3-isopropylmalate dehydrogenase.